Here is a 59-residue protein sequence, read N- to C-terminus: UPF0434 protein plu1633 (59 aa).

Belongs to the UPF0434 family.

The protein is UPF0434 protein plu1633 of Photorhabdus laumondii subsp. laumondii (strain DSM 15139 / CIP 105565 / TT01) (Photorhabdus luminescens subsp. laumondii).